The chain runs to 416 residues: Probable glucan 1,3-beta-glucosidase A (416 aa).

The N-terminal stretch at 1–22 (MIFKFSQKALVALYLVVGLAEA) is a signal peptide. Catalysis depends on Glu211, which acts as the Proton donor. Disulfide bonds link Cys291–Cys415 and Cys316–Cys342. The Nucleophile role is filled by Glu308. The N-linked (GlcNAc...) asparagine glycan is linked to Asn344.

It belongs to the glycosyl hydrolase 5 (cellulase A) family. Monomer. It depends on Mn(2+) as a cofactor.

Its subcellular location is the secreted. The enzyme catalyses Successive hydrolysis of beta-D-glucose units from the non-reducing ends of (1-&gt;3)-beta-D-glucans, releasing alpha-glucose.. In terms of biological role, beta-glucanases participate in the metabolism of beta-glucan, the main structural component of the cell wall. It could also function biosynthetically as a transglycosylase. This chain is Probable glucan 1,3-beta-glucosidase A (exgA), found in Aspergillus fumigatus (strain CBS 144.89 / FGSC A1163 / CEA10) (Neosartorya fumigata).